Consider the following 265-residue polypeptide: ETS-related transcription factor Elf-5 (265 aa).

The 87-residue stretch at 43 to 129 (YPAFEHQTAC…FILQNIRTQG (87 aa)) folds into the PNT domain. A DNA-binding region (ETS) is located at residues 173 to 254 (SHLWEFVRDL…VDRRLVYKFG (82 aa)).

This sequence belongs to the ETS family. Expressed exclusively in tissues with a high content of epithelial cells. Highly expressed in salivary gland, mammary gland, kidney and prostate. Weakly expressed in placenta and lung. Isoform 1 and isoform 2 are differentially expressed in different tissues. In the kidney, only isoform 1 was expressed, while prostate expressed both isoforms, with levels of isoform 2 being higher. Expression is up-regulated during keratinocyte differentiation. Several epithelial carcinoma cell lines showed lack of expression.

The protein resides in the nucleus. Transcriptionally activator that may play a role in regulating the later stages of keratinocytes terminal differentiation. Its function is as follows. Isoform 2 binds to DNA sequences containing the consensus nucleotide core sequence GGA[AT]. Transcriptionally activates SPRR2A and the parotid gland-specific PSP promoters. This Homo sapiens (Human) protein is ETS-related transcription factor Elf-5 (ELF5).